The chain runs to 153 residues: MKTFVLHIFIFALVAFASASRDSAKKIGSQYDNYETCLTEHGLTEDDIFSIGEVSSGQHKTNHEDTELHKNGCVMQCMLEKDGLMSGADYDEEKMREDYIKETGAQPGDQRIEALNACMQETKDMEDKCDKSLILVACVLAAEAVLADSSEGA.

A signal peptide spans 1 to 19 (MKTFVLHIFIFALVAFASA). Intrachain disulfides connect C37–C77, C73–C129, and C118–C138.

The protein belongs to the PBP/GOBP family. Homodimer.

It localises to the secreted. Functionally, colony queen number, a major feature of social organization, is associated with worker genotype for Gp-9. Colonies are headed by either a single reproductive queen (monogyne form) or multiple queens (polygyne form). Differences in worker Gp-9 genotypes between social forms may cause differences in workers' abilities to recognize queens and regulate their numbers. The polypeptide is Pheromone-binding protein Gp-9 (Solenopsis tridens (Fire ant)).